The sequence spans 310 residues: 4-hydroxythreonine-4-phosphate dehydrogenase (310 aa).

Residues His-126 and Thr-127 each coordinate substrate. Residues His-156, His-195, and His-251 each coordinate a divalent metal cation. The substrate site is built by Lys-259, Asn-268, and Arg-277.

The protein belongs to the PdxA family. In terms of assembly, homodimer. Zn(2+) is required as a cofactor. Requires Mg(2+) as cofactor. The cofactor is Co(2+).

The protein localises to the cytoplasm. It catalyses the reaction 4-(phosphooxy)-L-threonine + NAD(+) = 3-amino-2-oxopropyl phosphate + CO2 + NADH. Its pathway is cofactor biosynthesis; pyridoxine 5'-phosphate biosynthesis; pyridoxine 5'-phosphate from D-erythrose 4-phosphate: step 4/5. In terms of biological role, catalyzes the NAD(P)-dependent oxidation of 4-(phosphooxy)-L-threonine (HTP) into 2-amino-3-oxo-4-(phosphooxy)butyric acid which spontaneously decarboxylates to form 3-amino-2-oxopropyl phosphate (AHAP). The protein is 4-hydroxythreonine-4-phosphate dehydrogenase of Helicobacter acinonychis (strain Sheeba).